The sequence spans 874 residues: Alanine--tRNA ligase (874 aa).

4 residues coordinate Zn(2+): His-562, His-566, Cys-664, and His-668.

It belongs to the class-II aminoacyl-tRNA synthetase family. Zn(2+) is required as a cofactor.

It localises to the cytoplasm. The catalysed reaction is tRNA(Ala) + L-alanine + ATP = L-alanyl-tRNA(Ala) + AMP + diphosphate. Functionally, catalyzes the attachment of alanine to tRNA(Ala) in a two-step reaction: alanine is first activated by ATP to form Ala-AMP and then transferred to the acceptor end of tRNA(Ala). Also edits incorrectly charged Ser-tRNA(Ala) and Gly-tRNA(Ala) via its editing domain. The protein is Alanine--tRNA ligase of Neisseria meningitidis serogroup B (strain ATCC BAA-335 / MC58).